Reading from the N-terminus, the 473-residue chain is Photosystem II CP43 reaction center protein (473 aa).

A propeptide spanning residues 1–14 (MKILYSLRRFYHVE) is cleaved from the precursor. At Thr15 the chain carries N-acetylthreonine. Phosphothreonine is present on Thr15. The next 5 helical transmembrane spans lie at 69–93 (LFEVAHFVPEKPMYEQGLILLPHLA), 134–155 (LLGPETLEESFPFFGYVWQDRN), 178–200 (KALYFGGVYDTWAPGGGDVRKIT), 255–275 (KPFAWARRAFVWSGEAYLSYS), and 291–312 (WFNNTAYPSEFYGPTGPEASQA). Residue Glu367 coordinates [CaMn4O5] cluster. A helical transmembrane segment spans residues 447–471 (RARAAAAGFEKGIDRDLEPVVYMTP).

It belongs to the PsbB/PsbC family. PsbC subfamily. As to quaternary structure, PSII is composed of 1 copy each of membrane proteins PsbA, PsbB, PsbC, PsbD, PsbE, PsbF, PsbH, PsbI, PsbJ, PsbK, PsbL, PsbM, PsbT, PsbX, PsbY, PsbZ, Psb30/Ycf12, at least 3 peripheral proteins of the oxygen-evolving complex and a large number of cofactors. It forms dimeric complexes. Binds multiple chlorophylls and provides some of the ligands for the Ca-4Mn-5O cluster of the oxygen-evolving complex. It may also provide a ligand for a Cl- that is required for oxygen evolution. PSII binds additional chlorophylls, carotenoids and specific lipids. serves as cofactor. Phosphorylated in both bundle sheath and mesophyll cells, phosphorylation increases when cells are grown under high rather than low light regimes (70 vs 900 umol photons/m-2/s).

It is found in the plastid. It localises to the chloroplast thylakoid membrane. Functionally, one of the components of the core complex of photosystem II (PSII). It binds chlorophyll and helps catalyze the primary light-induced photochemical processes of PSII. PSII is a light-driven water:plastoquinone oxidoreductase, using light energy to abstract electrons from H(2)O, generating O(2) and a proton gradient subsequently used for ATP formation. This chain is Photosystem II CP43 reaction center protein, found in Zea mays (Maize).